Reading from the N-terminus, the 378-residue chain is UDP-N-acetylglucosamine--N-acetylmuramyl-(pentapeptide) pyrophosphoryl-undecaprenol N-acetylglucosamine transferase (378 aa).

UDP-N-acetyl-alpha-D-glucosamine-binding positions include 14–16 (TGG), asparagine 125, arginine 165, serine 193, and glutamine 293.

Belongs to the glycosyltransferase 28 family. MurG subfamily.

It localises to the cell inner membrane. It carries out the reaction di-trans,octa-cis-undecaprenyl diphospho-N-acetyl-alpha-D-muramoyl-L-alanyl-D-glutamyl-meso-2,6-diaminopimeloyl-D-alanyl-D-alanine + UDP-N-acetyl-alpha-D-glucosamine = di-trans,octa-cis-undecaprenyl diphospho-[N-acetyl-alpha-D-glucosaminyl-(1-&gt;4)]-N-acetyl-alpha-D-muramoyl-L-alanyl-D-glutamyl-meso-2,6-diaminopimeloyl-D-alanyl-D-alanine + UDP + H(+). Its pathway is cell wall biogenesis; peptidoglycan biosynthesis. In terms of biological role, cell wall formation. Catalyzes the transfer of a GlcNAc subunit on undecaprenyl-pyrophosphoryl-MurNAc-pentapeptide (lipid intermediate I) to form undecaprenyl-pyrophosphoryl-MurNAc-(pentapeptide)GlcNAc (lipid intermediate II). In Bartonella bacilliformis (strain ATCC 35685 / KC583 / Herrer 020/F12,63), this protein is UDP-N-acetylglucosamine--N-acetylmuramyl-(pentapeptide) pyrophosphoryl-undecaprenol N-acetylglucosamine transferase.